Consider the following 180-residue polypeptide: Acireductone dioxygenase (180 aa).

The Fe(2+) site is built by H97, H99, E103, and H141. The Ni(2+) site is built by H97, H99, E103, and H141.

Belongs to the acireductone dioxygenase (ARD) family. Monomer. Fe(2+) is required as a cofactor. The cofactor is Ni(2+).

The enzyme catalyses 1,2-dihydroxy-5-(methylsulfanyl)pent-1-en-3-one + O2 = 3-(methylsulfanyl)propanoate + CO + formate + 2 H(+). It catalyses the reaction 1,2-dihydroxy-5-(methylsulfanyl)pent-1-en-3-one + O2 = 4-methylsulfanyl-2-oxobutanoate + formate + 2 H(+). The protein operates within amino-acid biosynthesis; L-methionine biosynthesis via salvage pathway; L-methionine from S-methyl-5-thio-alpha-D-ribose 1-phosphate: step 5/6. Functionally, catalyzes 2 different reactions between oxygen and the acireductone 1,2-dihydroxy-3-keto-5-methylthiopentene (DHK-MTPene) depending upon the metal bound in the active site. Fe-containing acireductone dioxygenase (Fe-ARD) produces formate and 2-keto-4-methylthiobutyrate (KMTB), the alpha-ketoacid precursor of methionine in the methionine recycle pathway. Ni-containing acireductone dioxygenase (Ni-ARD) produces methylthiopropionate, carbon monoxide and formate, and does not lie on the methionine recycle pathway. The protein is Acireductone dioxygenase of Enterobacter sp. (strain 638).